A 211-amino-acid polypeptide reads, in one-letter code: Acyl-homoserine-lactone synthase (211 aa).

This sequence belongs to the autoinducer synthase family.

It carries out the reaction a fatty acyl-[ACP] + S-adenosyl-L-methionine = an N-acyl-L-homoserine lactone + S-methyl-5'-thioadenosine + holo-[ACP] + H(+). Functionally, required for the synthesis of OHHL (N-(3-oxohexanoyl)-L-homoserine lactone), an autoinducer molecule which binds to TraR and thus acts in the control of conjugal transfer. The sequence is that of Acyl-homoserine-lactone synthase (traI) from Agrobacterium fabrum (strain C58 / ATCC 33970) (Agrobacterium tumefaciens (strain C58)).